Consider the following 720-residue polypeptide: MQNEIKKVCVIGAGVMGSGIAALIANSSHQVVLLDILDKDSNDPNKIVKNSVKNLHKQKLSPLSFPDKVNFITIGNLEHDLDLIKECNLVIEVIVEKLEIKHQLYNKIIPYLKEDAIIASNTSTLPLKKLKVNLPNNIKSRFVITHFFNPPRYMELVELIIDHTIKDEVIEKVSVFLTKMLGKTIIKCNDTPGFIANRVGCFLLELVVHKAIAQNLNFVTIDQIFSRCLGLPNTGIFGLYDLIGHDVMKLISSSLISALPKSDDYHRIYTNTKVFDKMIEHNLIGRKGEGGFYRLSVSNGKKIKEVINISDLSYHPVQKVDISFNSLNELLSSNSIYGKFFSEIITEFYIYLTSLVPSVTNNIYDIDTTMKLGYSWHYGPFELLTIAVKNGWNLIIKNADLMNIPLPKYLASKEYQKIDKQKFNSKKDFLQESKIVLSNDSANLIHYCENLVFVITTKMNSLNHNVFYLLQEAVSKAENYGKNLYIYPQGNNFSAGADLKLILSYIQDGNFHNLENLLKLGQQTMRYLKYSSVHIISCARGVALGGGCELLLNSSYIVANQELNAGLIELGVGLIPGWTGVTEMFARSNGNKTKLIRNIKNIIEQNKTSSADYFKADYGIKNMQVNMNKHYILDDALKLRISKKIVSIPNKITLPKINIVSEIDTSKYNELQNKVLNKFQNIIDKHNEISEAELLTYEREMFLELAKTPQTIEKLQAIVG.

Residues 1–384 form a 3-hydroxyacyl-CoA dehydrogenase region; that stretch reads MQNEIKKVCV…SWHYGPFELL (384 aa). An enoyl-CoA hydratase/isomerase region spans residues 453 to 720; it reads FVITTKMNSL…TIEKLQAIVG (268 aa).

The protein in the N-terminal section; belongs to the 3-hydroxyacyl-CoA dehydrogenase family. It in the C-terminal section; belongs to the enoyl-CoA hydratase/isomerase family.

The catalysed reaction is a (3S)-3-hydroxyacyl-CoA + NAD(+) = a 3-oxoacyl-CoA + NADH + H(+). It catalyses the reaction a (3S)-3-hydroxyacyl-CoA = a (2E)-enoyl-CoA + H2O. It carries out the reaction a 4-saturated-(3S)-3-hydroxyacyl-CoA = a (3E)-enoyl-CoA + H2O. The enzyme catalyses a (3Z)-enoyl-CoA = a 4-saturated (2E)-enoyl-CoA. The catalysed reaction is a (3E)-enoyl-CoA = a 4-saturated (2E)-enoyl-CoA. The chain is Putative fatty acid oxidation complex trifunctional enzyme from Rickettsia prowazekii (strain Madrid E).